A 799-amino-acid polypeptide reads, in one-letter code: Zinc finger protein 227 (799 aa).

The KRAB domain occupies 23-94; sequence VTFKDVAVVF…ETETQRSSKH (72 aa). C2H2-type zinc fingers lie at residues 250 to 272, 269 to 291, 324 to 346, 352 to 374, 380 to 402, 408 to 430, 436 to 458, 464 to 486, 492 to 514, 520 to 542, 548 to 570, 576 to 598, 604 to 626, 632 to 654, 660 to 682, 688 to 710, 716 to 738, 744 to 766, and 772 to 794; these read HPCG…PNVH, PNVH…QRIH, YRCD…YRTH, YKCE…QRVH, YKCD…RRVH, YKCE…FRVH, YKCK…QNVH, FKCE…QRVH, YRCD…QVIH, YKCG…QRVH, YKCD…QRGH, HICE…LGVH, and YKCD…QKVH.

The protein belongs to the krueppel C2H2-type zinc-finger protein family.

Its subcellular location is the nucleus. Its function is as follows. May be involved in transcriptional regulation. The protein is Zinc finger protein 227 (ZNF227) of Homo sapiens (Human).